The chain runs to 540 residues: Na(+)/H(+) antiporter NhaS2 (540 aa).

Transmembrane regions (helical) follow at residues 29–49, 71–91, 117–137, 138–158, 207–227, 256–276, 296–316, 323–343, 358–378, and 389–409; these read ITTLVENLIILLLVATLVALV, GLSVGLNPELILNFFLPILIF, VVISAAITAVLLKIGLGLAWV, TAAGVSVILTITDTVSVIAAF, IFVAFVGGGLVGLGLGYLCVG, LGVSSAIAVVVAGLVIGNLAL, FGVNTLIFLLVGIEVYPSILL, LIAIVAYQIGRVFSIYPLLYL, VLIAGNVKGSLSMALALALPL, and LVFSTVMVSLIGQGLSLPWVV.

It belongs to the monovalent cation:proton antiporter 1 (CPA1) transporter (TC 2.A.36) family.

It localises to the cell membrane. Functionally, required for Na(+) uptake into the cell, especially at low external Na(+) concentrations or low Na(+)/K(+) ratios. May be part of a sodium cycle that permits re-entry of sodium into the cell. This is Na(+)/H(+) antiporter NhaS2 (nhaS2) from Synechocystis sp. (strain ATCC 27184 / PCC 6803 / Kazusa).